Here is a 419-residue protein sequence, read N- to C-terminus: Histidine--tRNA ligase (419 aa).

Belongs to the class-II aminoacyl-tRNA synthetase family. Homodimer.

The protein resides in the cytoplasm. The catalysed reaction is tRNA(His) + L-histidine + ATP = L-histidyl-tRNA(His) + AMP + diphosphate + H(+). The polypeptide is Histidine--tRNA ligase (Synechococcus sp. (strain JA-3-3Ab) (Cyanobacteria bacterium Yellowstone A-Prime)).